The primary structure comprises 200 residues: Recombination protein RecR (200 aa).

Residues C58–C73 form a C4-type zinc finger. One can recognise a Toprim domain in the interval S81 to S177.

Belongs to the RecR family.

In terms of biological role, may play a role in DNA repair. It seems to be involved in an RecBC-independent recombinational process of DNA repair. It may act with RecF and RecO. This chain is Recombination protein RecR, found in Limosilactobacillus reuteri (strain DSM 20016) (Lactobacillus reuteri).